A 473-amino-acid polypeptide reads, in one-letter code: Photosystem II CP43 reaction center protein (473 aa).

Positions 1–14 are excised as a propeptide; the sequence is MKTLYSRRRFYHVE. The residue at position 15 (T15) is an N-acetylthreonine. T15 carries the post-translational modification Phosphothreonine. 5 helical membrane-spanning segments follow: residues 69 to 93, 134 to 155, 178 to 200, 255 to 275, and 291 to 312; these read LFEV…PHLA, LLGP…KDRN, KALY…RKIT, KPFA…LSYS, and WFNN…ASQA. A [CaMn4O5] cluster-binding site is contributed by E367. A helical transmembrane segment spans residues 447-471; the sequence is RARAAAAGFEKGIDRDFEPVLSMTP.

The protein belongs to the PsbB/PsbC family. PsbC subfamily. As to quaternary structure, PSII is composed of 1 copy each of membrane proteins PsbA, PsbB, PsbC, PsbD, PsbE, PsbF, PsbH, PsbI, PsbJ, PsbK, PsbL, PsbM, PsbT, PsbX, PsbY, PsbZ, Psb30/Ycf12, at least 3 peripheral proteins of the oxygen-evolving complex and a large number of cofactors. It forms dimeric complexes. It depends on Binds multiple chlorophylls and provides some of the ligands for the Ca-4Mn-5O cluster of the oxygen-evolving complex. It may also provide a ligand for a Cl- that is required for oxygen evolution. PSII binds additional chlorophylls, carotenoids and specific lipids. as a cofactor.

It localises to the plastid. The protein resides in the chloroplast thylakoid membrane. In terms of biological role, one of the components of the core complex of photosystem II (PSII). It binds chlorophyll and helps catalyze the primary light-induced photochemical processes of PSII. PSII is a light-driven water:plastoquinone oxidoreductase, using light energy to abstract electrons from H(2)O, generating O(2) and a proton gradient subsequently used for ATP formation. This chain is Photosystem II CP43 reaction center protein, found in Solanum bulbocastanum (Wild potato).